The chain runs to 381 residues: Tryptophan--tRNA ligase (381 aa).

The 'HIGH' region motif lies at 82–90 (PSLGMHIGH). Positions 254-258 (KMSSS) match the 'KMSKS' region motif.

The protein belongs to the class-I aminoacyl-tRNA synthetase family.

Its subcellular location is the cytoplasm. It catalyses the reaction tRNA(Trp) + L-tryptophan + ATP = L-tryptophyl-tRNA(Trp) + AMP + diphosphate + H(+). The protein is Tryptophan--tRNA ligase of Sulfolobus acidocaldarius (strain ATCC 33909 / DSM 639 / JCM 8929 / NBRC 15157 / NCIMB 11770).